The chain runs to 304 residues: Aspartate carbamoyltransferase catalytic subunit (304 aa).

Carbamoyl phosphate contacts are provided by Arg56 and Thr57. Lys85 lines the L-aspartate pocket. 3 residues coordinate carbamoyl phosphate: Arg106, His134, and Gln137. Residues Arg167 and Arg226 each coordinate L-aspartate. 2 residues coordinate carbamoyl phosphate: Leu265 and Pro266.

This sequence belongs to the aspartate/ornithine carbamoyltransferase superfamily. ATCase family. As to quaternary structure, heterooligomer of catalytic and regulatory chains.

It carries out the reaction carbamoyl phosphate + L-aspartate = N-carbamoyl-L-aspartate + phosphate + H(+). The protein operates within pyrimidine metabolism; UMP biosynthesis via de novo pathway; (S)-dihydroorotate from bicarbonate: step 2/3. Functionally, catalyzes the condensation of carbamoyl phosphate and aspartate to form carbamoyl aspartate and inorganic phosphate, the committed step in the de novo pyrimidine nucleotide biosynthesis pathway. This chain is Aspartate carbamoyltransferase catalytic subunit, found in Picrophilus torridus (strain ATCC 700027 / DSM 9790 / JCM 10055 / NBRC 100828 / KAW 2/3).